An 86-amino-acid chain; its full sequence is Large ribosomal subunit protein bL27 (86 aa).

The segment at 1 to 26 (MATKKAGGSSRNGRDSAGRRLGVKKS) is disordered.

This sequence belongs to the bacterial ribosomal protein bL27 family.

The polypeptide is Large ribosomal subunit protein bL27 (Rickettsia prowazekii (strain Madrid E)).